The sequence spans 280 residues: MIHFTKMHGLGNDFMVVDGVTQNVFFSPEQIKRLADRNFGIGFDQLLLVEPPYDPDLDFHYRIFNADGGEVEQCGNGARCFARFVRNKGLTNKQKIRVSTSNGKITLRLERDGNVTVNMGIPVLEPGRIPFNAKKMEKTYLLQATNPDSTMQTFLFGAVSMGNPHCVLDVEDIEAADVEGIGALLTRHERFPKGVNVGFMQIINSGHIKLRVYERGAAETLACGTGACAAAVVGQLQGKLDNCVRVDLPGGTLTINWEGEGKPLWMTGPAEHVYDGQIQQ.

Substrate contacts are provided by asparagine 12, glutamine 45, and asparagine 65. Catalysis depends on cysteine 74, which acts as the Proton donor. Residues 75–76 (GN), asparagine 163, asparagine 196, and 214–215 (ER) each bind substrate. Catalysis depends on cysteine 223, which acts as the Proton acceptor. 224 to 225 (GT) contributes to the substrate binding site.

The protein belongs to the diaminopimelate epimerase family. Homodimer.

The protein resides in the cytoplasm. The enzyme catalyses (2S,6S)-2,6-diaminopimelate = meso-2,6-diaminopimelate. Its pathway is amino-acid biosynthesis; L-lysine biosynthesis via DAP pathway; DL-2,6-diaminopimelate from LL-2,6-diaminopimelate: step 1/1. Catalyzes the stereoinversion of LL-2,6-diaminopimelate (L,L-DAP) to meso-diaminopimelate (meso-DAP), a precursor of L-lysine and an essential component of the bacterial peptidoglycan. The chain is Diaminopimelate epimerase from Shewanella sediminis (strain HAW-EB3).